A 344-amino-acid polypeptide reads, in one-letter code: Protein RecA (344 aa).

65 to 72 (GPESSGKT) provides a ligand contact to ATP.

This sequence belongs to the RecA family.

The protein localises to the cytoplasm. Functionally, can catalyze the hydrolysis of ATP in the presence of single-stranded DNA, the ATP-dependent uptake of single-stranded DNA by duplex DNA, and the ATP-dependent hybridization of homologous single-stranded DNAs. It interacts with LexA causing its activation and leading to its autocatalytic cleavage. The polypeptide is Protein RecA (Rubrobacter xylanophilus (strain DSM 9941 / JCM 11954 / NBRC 16129 / PRD-1)).